A 322-amino-acid chain; its full sequence is Protein SEC13 homolog (322 aa).

N-acetylvaline is present on V2. 6 WD repeats span residues 11 to 50, 55 to 96, 101 to 144, 148 to 204, 210 to 253, and 260 to 299; these read SHED…QILI, GHEG…WEKS, GHDS…EVKK, AHTI…QWKE, AHSD…SNTW, and KFND…QWVC. S184 is subject to Phosphoserine. Position 309 is a phosphoserine (S309).

Belongs to the WD repeat SEC13 family. As to quaternary structure, at the nuclear pore: component of the Y-shaped Nup107-160 subcomplex of the nuclear pore complex (NPC). The Nup107-160 subcomplex includes NUP160, NUP133, NUP107, NUP98, NUP85, NUP43, NUP37, SEH1 and SEC13. At the COPII coat complex: interacts with SEC31A and SEC31B. Interacts with SEC16A. Interacts with SEC16B. Component of the GATOR2 subcomplex, composed of MIOS, SEC13, SEH1L, WDR24 and WDR59. The GATOR2 complex interacts with CASTOR1 and CASTOR2; the interaction is negatively regulated by arginine. The GATOR2 complex interacts with SESN1, SESN2 and SESN3; the interaction is negatively regulated by amino acids.

It is found in the cytoplasmic vesicle. The protein localises to the COPII-coated vesicle membrane. It localises to the endoplasmic reticulum membrane. The protein resides in the nucleus. Its subcellular location is the nuclear pore complex. It is found in the lysosome membrane. With respect to regulation, the GATOR2 complex is negatively regulated by the upstream amino acid sensors CASTOR1 and SESN2, which sequester the GATOR2 complex in absence of amino acids. In the presence of abundant amino acids, GATOR2 is released from CASTOR1 and SESN2 and activated. Its function is as follows. Functions as a component of the nuclear pore complex (NPC) and the COPII coat. At the endoplasmic reticulum, SEC13 is involved in the biogenesis of COPII-coated vesicles. Required for the exit of adipsin (CFD/ADN), an adipocyte-secreted protein from the endoplasmic reticulum. In terms of biological role, as a component of the GATOR2 complex, functions as an activator of the amino acid-sensing branch of the mTORC1 signaling pathway. The GATOR2 complex indirectly activates mTORC1 through the inhibition of the GATOR1 subcomplex. GATOR2 probably acts as an E3 ubiquitin-protein ligase toward GATOR1. In the presence of abundant amino acids, the GATOR2 complex mediates ubiquitination of the NPRL2 core component of the GATOR1 complex, leading to GATOR1 inactivation. In the absence of amino acids, GATOR2 is inhibited, activating the GATOR1 complex. Within the GATOR2 complex, SEC13 and SEH1L are required to stabilize the complex. This is Protein SEC13 homolog from Homo sapiens (Human).